Reading from the N-terminus, the 506-residue chain is FAD-linked oxidoreductase aurO (506 aa).

Residues 92-260 enclose the FAD-binding PCMH-type domain; the sequence is ITAQPLAICR…AETDVRVYPM (169 aa).

The protein belongs to the oxygen-dependent FAD-linked oxidoreductase family. As to quaternary structure, might be part of an extracellular enzyme complex composed of GIP1, aurF, aurO and aurS. The cofactor is FAD.

The protein resides in the secreted. It is found in the extracellular space. Its pathway is pigment biosynthesis. Its function is as follows. FAD-linked oxidoreductase; part of the gene cluster that mediates the biosynthesis of aurofusarin, a red mycelium pigment which is acting as a mycotoxin. The first step is performed by the polyketide synthase which condenses one acetyl-CoA and 6 malonyl-CoA units to form the first intermediate, the cyclic heptaketide and yellow pigment YWA1. The C2 hydroxyl group in the pyrone ring of YWA1 is probably formed during ring closure by an aldol-type cyclization reaction. The dehydratase aurZ then acts as the first tailoring enzyme in the aurofusarin biosynthetic pathway by converting YWA1 to nor-rubrofusarin. Nor-rubrofusarin is then methylated to rubrofusarin by the O-methyltransferase aurJ. Rubrofusarin is then transported across the plasma membrane by the rubrofusarin-specific pump aurT for further enzymatic processing by the extracellular complex composed of GIP1, aurF, aurO and aurS to yield aurofusarin. This is FAD-linked oxidoreductase aurO from Gibberella zeae (strain ATCC MYA-4620 / CBS 123657 / FGSC 9075 / NRRL 31084 / PH-1) (Wheat head blight fungus).